Reading from the N-terminus, the 587-residue chain is Phosphatidate phosphatase APP1 (587 aa).

2 disordered regions span residues 1–28 and 150–178; these read MNSQGYDESSSSTAATSGPTSGDPRMGK and PPHLEEDSGDLNDSQSSIESSLSSKSENR. 2 stretches are compositionally biased toward low complexity: residues 9–22 and 163–174; these read SSSSTAATSGPTSG and SQSSIESSLSSK. Positions 281–285 match the DXDXT motif motif; the sequence is DIDDT. The segment at 452–521 is disordered; that stretch reads QQRPMQMTKS…NRQLPNLDAN (70 aa). Residues 467–483 form an interaction with SH3 domain of ABP1 region; the sequence is RRPPPPPIPSTQKPSLT.

In terms of assembly, monomer. Interacts with ABP1. Requires Mg(2+) as cofactor. N-glycosylated.

It localises to the cytoplasm. The protein resides in the cytoskeleton. It is found in the actin patch. The enzyme catalyses a 1,2-diacyl-sn-glycero-3-phosphate + H2O = a 1,2-diacyl-sn-glycerol + phosphate. The catalysed reaction is 1,2-di-(9Z-octadecenoyl)-sn-glycero-3-phosphate + H2O = 1,2-di-(9Z-octadecenoyl)-sn-glycerol + phosphate. Inhibited by N-ethylmaleimide. Mg(2+)-dependent phosphatidate (PA) phosphatase which catalyzes the dephosphorylation of PA to yield diacylglycerol. May play a role in vesicular trafficking through its PAP activity at cortical actin patches. Can also utilize diacylglycerol pyrophosphate and lyso-PA as substrates with specificity constants 4- and 7-fold lower, respectively, when compared with PA. The protein is Phosphatidate phosphatase APP1 (APP1) of Saccharomyces cerevisiae (strain ATCC 204508 / S288c) (Baker's yeast).